Consider the following 210-residue polypeptide: Proteasome subunit beta (210 aa).

The propeptide at 1-9 (MNDKNTLKG) is removed in mature form; by autocatalysis. The Nucleophile role is filled by threonine 10.

The protein belongs to the peptidase T1B family. The 20S proteasome core is composed of 14 alpha and 14 beta subunits that assemble into four stacked heptameric rings, resulting in a barrel-shaped structure. The two inner rings, each composed of seven catalytic beta subunits, are sandwiched by two outer rings, each composed of seven alpha subunits. The catalytic chamber with the active sites is on the inside of the barrel. Has a gated structure, the ends of the cylinder being occluded by the N-termini of the alpha-subunits. Is capped at one or both ends by the proteasome regulatory ATPase, PAN.

The protein localises to the cytoplasm. It catalyses the reaction Cleavage of peptide bonds with very broad specificity.. The formation of the proteasomal ATPase PAN-20S proteasome complex, via the docking of the C-termini of PAN into the intersubunit pockets in the alpha-rings, triggers opening of the gate for substrate entry. Interconversion between the open-gate and close-gate conformations leads to a dynamic regulation of the 20S proteasome proteolysis activity. In terms of biological role, component of the proteasome core, a large protease complex with broad specificity involved in protein degradation. The chain is Proteasome subunit beta from Methanothermobacter thermautotrophicus (strain ATCC 29096 / DSM 1053 / JCM 10044 / NBRC 100330 / Delta H) (Methanobacterium thermoautotrophicum).